The chain runs to 597 residues: Glutamine--fructose-6-phosphate aminotransferase [isomerizing] (597 aa).

The Nucleophile; for GATase activity role is filled by cysteine 2. Residues 2-218 enclose the Glutamine amidotransferase type-2 domain; that stretch reads CGIVGYIGDS…ENSVGQISLE (217 aa). SIS domains lie at 276 to 416 and 449 to 587; these read IDPE…QLGT and LSKR…VDHP. Residue lysine 592 is the For Fru-6P isomerization activity of the active site.

Homodimer.

Its subcellular location is the cytoplasm. The catalysed reaction is D-fructose 6-phosphate + L-glutamine = D-glucosamine 6-phosphate + L-glutamate. Its function is as follows. Catalyzes the first step in hexosamine metabolism, converting fructose-6P into glucosamine-6P using glutamine as a nitrogen source. The protein is Glutamine--fructose-6-phosphate aminotransferase [isomerizing] of Helicobacter pylori (strain J99 / ATCC 700824) (Campylobacter pylori J99).